The primary structure comprises 190 residues: Potassium-transporting ATPase KdpC subunit (190 aa).

Residues 13–33 (VGFLLLTLVCGVVYPGIVTII) form a helical membrane-spanning segment.

Belongs to the KdpC family. In terms of assembly, the system is composed of three essential subunits: KdpA, KdpB and KdpC.

It localises to the cell membrane. In terms of biological role, part of the high-affinity ATP-driven potassium transport (or Kdp) system, which catalyzes the hydrolysis of ATP coupled with the electrogenic transport of potassium into the cytoplasm. This subunit acts as a catalytic chaperone that increases the ATP-binding affinity of the ATP-hydrolyzing subunit KdpB by the formation of a transient KdpB/KdpC/ATP ternary complex. This is Potassium-transporting ATPase KdpC subunit from Listeria welshimeri serovar 6b (strain ATCC 35897 / DSM 20650 / CCUG 15529 / CIP 8149 / NCTC 11857 / SLCC 5334 / V8).